We begin with the raw amino-acid sequence, 383 residues long: NIPA-like protein 2 (383 aa).

N-linked (GlcNAc...) asparagine glycans are attached at residues asparagine 23 and asparagine 33. Helical transmembrane passes span 46–66, 88–108, 110–130, 144–164, 177–197, 209–229, and 243–263; these read IHLF…ISLN, VLWW…FAAY, FAPI…SAII, LLGT…APNI, LVGW…CILL, VILL…VKAV, and LTYP…VFQV. N-linked (GlcNAc...) asparagine glycosylation occurs at asparagine 274. The next 2 helical transmembrane spans lie at 278–298 and 306–326; these read VVPV…IIFY and FLTV…VFLV. The segment at 355–383 is disordered; the sequence is QPDSHSLSYGTLPDGSDSTKSQSGEKKEV.

This sequence belongs to the NIPA family.

The protein localises to the membrane. In Homo sapiens (Human), this protein is NIPA-like protein 2 (NIPAL2).